A 229-amino-acid chain; its full sequence is 2-C-methyl-D-erythritol 4-phosphate cytidylyltransferase (229 aa).

This sequence belongs to the IspD/TarI cytidylyltransferase family. IspD subfamily.

It carries out the reaction 2-C-methyl-D-erythritol 4-phosphate + CTP + H(+) = 4-CDP-2-C-methyl-D-erythritol + diphosphate. The protein operates within isoprenoid biosynthesis; isopentenyl diphosphate biosynthesis via DXP pathway; isopentenyl diphosphate from 1-deoxy-D-xylulose 5-phosphate: step 2/6. Catalyzes the formation of 4-diphosphocytidyl-2-C-methyl-D-erythritol from CTP and 2-C-methyl-D-erythritol 4-phosphate (MEP). The polypeptide is 2-C-methyl-D-erythritol 4-phosphate cytidylyltransferase (Neisseria gonorrhoeae (strain NCCP11945)).